A 261-amino-acid chain; its full sequence is Flagellar L-ring protein (261 aa).

A signal peptide spans methionine 1 to glycine 18. Cysteine 19 is lipidated: N-palmitoyl cysteine. Cysteine 19 carries the S-diacylglycerol cysteine lipid modification. The interval threonine 37–proline 67 is disordered.

This sequence belongs to the FlgH family. As to quaternary structure, the basal body constitutes a major portion of the flagellar organelle and consists of four rings (L,P,S, and M) mounted on a central rod.

It is found in the cell outer membrane. Its subcellular location is the bacterial flagellum basal body. Assembles around the rod to form the L-ring and probably protects the motor/basal body from shearing forces during rotation. The sequence is that of Flagellar L-ring protein from Vibrio cholerae serotype O1 (strain ATCC 39541 / Classical Ogawa 395 / O395).